We begin with the raw amino-acid sequence, 335 residues long: Protein FATTY ACID EXPORT 3, chloroplastic (335 aa).

Residues 1-72 (MMSIPMELMS…PEVLLNRSVV (72 aa)) constitute a chloroplast transit peptide. The disordered stretch occupies residues 82 to 101 (GESGVEVGKEKSDIDVEDDT). Residues 88-101 (VGKEKSDIDVEDDT) are compositionally biased toward basic and acidic residues. Positions 101 to 160 (TSKEAWKQTLESFKEQVSKMQSVSSEAYSVNSQKAMTVLKETSEQLRIQAEKAKEELGTK) form a coiled coil. Transmembrane regions (helical) follow at residues 205–225 (FHVG…NFMV), 228–248 (SIPA…LSLA), and 286–306 (STFL…FYLY). The segment at 316–335 (PTLEDGGEDESSDGFVRSEG) is disordered.

It belongs to the TMEM14 family.

It is found in the plastid. The protein localises to the chloroplast membrane. In terms of biological role, may be involved in free fatty acids export from the plastids. This Arabidopsis thaliana (Mouse-ear cress) protein is Protein FATTY ACID EXPORT 3, chloroplastic.